The primary structure comprises 226 residues: MALSDADVQKQIKHMMAFIEQEANEKAEEIDAKAEEEFNIEKGRLVQTQRLKIMEYYEKKEKQIEQQKKIQMSNLMNQARLKVLRARDDLITDLLNEAKQRLSKVVKDTTRYQVLLDGLVLQGLYQLLEPRMIVRCRKQDFPLVKAAVQKAIPMYKIATKKDVDVQIDLEAYLPEDIAGGVEIYNGDRKIKVSNTLESRLDLIAQQMMPEVRGALFGANANRKFLD.

Ala-2 bears the N-acetylalanine mark. Residue Tyr-56 is modified to Phosphotyrosine.

It belongs to the V-ATPase E subunit family. V-ATPase is a heteromultimeric enzyme made up of two complexes: the ATP-hydrolytic V1 complex and the proton translocation V0 complex. The V1 complex consists of three catalytic AB heterodimers that form a heterohexamer, three peripheral stalks each consisting of EG heterodimers, one central rotor including subunits D and F, and the regulatory subunits C and H. The proton translocation complex V0 consists of the proton transport subunit a, a ring of proteolipid subunits c9c'', rotary subunit d, subunits e and f, and the accessory subunits ATP6AP1/Ac45 and ATP6AP2/PRR. Interacts with RABL2/RABL2A; binds preferentially to GTP-bound RABL2. Interacts with ALDOC. Interacts with RAB11B. As to expression, expressed in brain (at protein level).

It is found in the apical cell membrane. The protein resides in the cytoplasmic vesicle. The protein localises to the secretory vesicle. It localises to the synaptic vesicle membrane. Its subcellular location is the clathrin-coated vesicle membrane. Functionally, subunit of the V1 complex of vacuolar(H+)-ATPase (V-ATPase), a multisubunit enzyme composed of a peripheral complex (V1) that hydrolyzes ATP and a membrane integral complex (V0) that translocates protons. V-ATPase is responsible for acidifying and maintaining the pH of intracellular compartments and in some cell types, is targeted to the plasma membrane, where it is responsible for acidifying the extracellular environment. The polypeptide is V-type proton ATPase subunit E 1 (Atp6v1e1) (Rattus norvegicus (Rat)).